A 2280-amino-acid chain; its full sequence is Genome polyprotein (2280 aa).

In terms of domain architecture, SF3 helicase spans 454–608; sequence ETQANNIRST…EEWKKRNPGK (155 aa). 480–487 is an ATP binding site; that stretch reads GAPGIGKT. At tyrosine 965 the chain carries O-(5'-phospho-RNA)-tyrosine. The Peptidase C24 domain maps to 1054–1202; it reads GPTAIVEFTQ…TKVAQRVVKE (149 aa). Active-site for 3CLpro activity residues include histidine 1084, glutamate 1105, and cysteine 1169. Positions 1442 to 1567 constitute a RdRp catalytic domain; the sequence is GVLYCLDYSK…SVCPATASIF (126 aa). Residues 1722–1746 form a disordered region; sequence GNGSNPEPKQSNNPMVVDPPGTTGP. Over residues 1723–1735 the composition is skewed to polar residues; it reads NGSNPEPKQSNNP.

In terms of assembly, homodimer. Homomultimer. In terms of processing, specific enzymatic cleavages in vivo yield mature proteins. Pro-Pol is first autocatalytically cleaved, then processes the whole polyprotein. VPg is uridylylated by the polymerase and is covalently attached to the 5'-end of the polyadenylated genomic and subgenomic RNAs. This uridylylated form acts as a nucleotide-peptide primer for the polymerase.

Its subcellular location is the virion. It localises to the host cytoplasm. The enzyme catalyses a ribonucleoside 5'-triphosphate + H2O = a ribonucleoside 5'-diphosphate + phosphate + H(+). It carries out the reaction RNA(n) + a ribonucleoside 5'-triphosphate = RNA(n+1) + diphosphate. It catalyses the reaction Endopeptidase with a preference for cleavage when the P1 position is occupied by Glu-|-Xaa and the P1' position is occupied by Gly-|-Yaa.. Together with NTPase and NS4, initiates the formation of the replication complex. Induces the proliferation of the host smooth ER membranes forming long tubular structures. These remodeled membranes probably form the viral factories that contain the replication complex. In terms of biological role, displays NTPase activity, but no helicase activity. Induces the formation of convoluted membranes derived from the host ER. These remodeled membranes probably form the viral factories that contain the replication complex. Together with NS2 and NS4, initiates the formation of the replication complex. Its function is as follows. Probable key protein responsible for the formation of membrane alterations by the virus. Induces the formation of convoluted membranes derived from the host ER. These remodeled membranes probably form the viral factories that contain the replication complex. Together with NS2 and NTPase, initiates the formation of the replication complex. Functionally, viral genome-linked protein is covalently linked to the 5'-end of the positive-strand, negative-strand genomic RNAs and subgenomic RNA. Acts as a genome-linked replication primer. May recruit ribosome to viral RNA thereby promoting viral proteins translation. Interacts with host translation initiation complex to allow the translation of viral proteins. Protease-polymerase p76 processes the polyprotein: Pro-Pol is first released by autocleavage, then all other proteins are cleaved. Cleaves host translation initiation factor eIF4G1, eIF4G2 and PABP1 thereby inducing a shutdown of host protein synthesis. This shutdown may not prevent viral mRNA from being translated since viral Vpg replaces the cap. It is also an RNA-directed RNA polymerase which replicates genomic and antigenomic viral RNA by recognizing specific signals. Also transcribes a subgenomic mRNA by initiating RNA synthesis internally on antigenomic RNA. This sgRNA codes for structural proteins. Catalyzes the covalent attachment VPg with viral RNAs. In terms of biological role, capsid protein self assembles to form an icosahedral capsid with a T=3 symmetry, about 38 nm in diameter, and consisting of 180 capsid proteins. The capsid encapsulate the genomic RNA and VP2 proteins. Attaches virion to target cells, inducing endocytosis of the viral particle. Acidification of the endosome induces conformational change of capsid protein thereby injecting virus genomic RNA into host cytoplasm. This chain is Genome polyprotein, found in Homo sapiens (Human).